The following is a 172-amino-acid chain: R-phycocyanin-2 beta chain (172 aa).

Asn72 bears the N4-methylasparagine mark. Cys82 contributes to the (2R,3E)-phycocyanobilin binding site. Cys153 contacts (2R,3E)-phycoerythrobilin.

It belongs to the phycobiliprotein family. Heterodimer of an alpha and a beta chain. Contains two covalently linked bilin chromophores.

It is found in the cellular thylakoid membrane. In terms of biological role, light-harvesting photosynthetic bile pigment-protein from the phycobiliprotein complex. The protein is R-phycocyanin-2 beta chain (rpcB) of Synechococcus sp. (strain WH8103).